Consider the following 253-residue polypeptide: Trypsin delta (253 aa).

A signal peptide spans 1–22 (MLKFVILLSAVACALGGTVPEG). Residues 23–30 (LLPQLDGR) constitute a propeptide, activation peptide. Residues 31–253 (IVGGSATTIS…ALRSWVISNA (223 aa)) form the Peptidase S1 domain. Cysteine 56 and cysteine 72 are oxidised to a cystine. Residues histidine 71 and aspartate 116 each act as charge relay system in the active site. Intrachain disulfides connect cysteine 180–cysteine 197 and cysteine 206–cysteine 230. Catalysis depends on serine 210, which acts as the Charge relay system.

This sequence belongs to the peptidase S1 family.

It localises to the secreted. Its subcellular location is the extracellular space. The enzyme catalyses Preferential cleavage: Arg-|-Xaa, Lys-|-Xaa.. In Drosophila melanogaster (Fruit fly), this protein is Trypsin delta.